The sequence spans 748 residues: Methylmalonyl-CoA mutase, mitochondrial (748 aa).

The transit peptide at 1-30 directs the protein to the mitochondrion; that stretch reads MLRAKNQLFLLSPHYLKQLNIPSASRWKRL. Position 48 (Q48) interacts with malonyl-CoA. Position 87 is an N6-acetyllysine (K87). Residues 94–97 and 104–108 each bind malonyl-CoA; these read YPTM and TIRQY. K210 is subject to N6-acetyllysine. Malonyl-CoA contacts are provided by residues 214–216, R226, K253, H263, and 302–304; these read TIQ and RLS. K333 is modified (N6-acetyllysine). K341 bears the N6-succinyllysine mark. S479 carries the post-translational modification Phosphoserine. An N6-succinyllysine modification is found at K593. Residue K600 is modified to N6-acetyllysine. Positions 612 to 744 constitute a B12-binding domain; sequence RPRLLVAKMG…DDIEKCLAEK (133 aa). H625 lines the adenosylcob(III)alamin pocket.

The protein belongs to the methylmalonyl-CoA mutase family. As to quaternary structure, homodimer. Interacts (the apoenzyme form) with MMAA; the interaction is GTP dependent. Requires adenosylcob(III)alamin as cofactor.

The protein localises to the mitochondrion matrix. It is found in the mitochondrion. It localises to the cytoplasm. The enzyme catalyses (R)-methylmalonyl-CoA = succinyl-CoA. Its activity is regulated as follows. Inhibited by itaconyl-CoA, a metabolite that inactivates the coenzyme B12 cofactor. In terms of biological role, catalyzes the reversible isomerization of methylmalonyl-CoA (MMCoA) (generated from branched-chain amino acid metabolism and degradation of dietary odd chain fatty acids and cholesterol) to succinyl-CoA (3-carboxypropionyl-CoA), a key intermediate of the tricarboxylic acid cycle. This is Methylmalonyl-CoA mutase, mitochondrial (Mmut) from Mus musculus (Mouse).